Reading from the N-terminus, the 437-residue chain is Sodium/bile acid cotransporter 4 (437 aa).

Over 1–103 (MDGNDNVTLL…LPFWDTPLNH (103 aa)) the chain is Extracellular. Residues Asn6, Asn18, and Asn24 are each glycosylated (N-linked (GlcNAc...) asparagine). A disordered region spans residues 37 to 82 (APASSAGPGPGLSLGPGPSFGFSPGPTPTPEPTTSGLAGGAASHGP). Over residues 51–60 (GPGPSFGFSP) the composition is skewed to low complexity. A helical transmembrane segment spans residues 104-124 (GLNVFVGAALCITMLGLGCTV). At 125 to 140 (DVNHFGAHVRRPVGAL) the chain is on the cytoplasmic side. The helical transmembrane segment at 141–161 (LAALCQFGLLPLLAFLLALAF) threads the bilayer. The Extracellular segment spans residues 162 to 197 (KLDEVAAVAVLLCGCCPGGNLSNLMSLLVDGDMNLS). Asn181 and Asn195 each carry an N-linked (GlcNAc...) asparagine glycan. Residues 198–218 (IIMTISSTLLALVLMPLCLWI) form a helical membrane-spanning segment. At 219–233 (YSWAWINTPIVQLLP) the chain is on the cytoplasmic side. The chain crosses the membrane as a helical span at residues 234-254 (LGTVTLTLCSTLIPIGLGVFI). The Extracellular segment spans residues 255–267 (RYKYSRVADYIVK). A helical transmembrane segment spans residues 268–288 (VSLWSLLVTLVVLFIMTGTML). Residues 289–291 (GPE) lie on the Cytoplasmic side of the membrane. The helical transmembrane segment at 292 to 312 (LLASIPAAVYVIAIFMPLAGY) threads the bilayer. Over 313–360 (ASGYGLATLFHLPPNCKRTVCLETGSQNVQLCTAILKLAFPPQFIGSM) the chain is Extracellular. Residues 361–381 (YMFPLLYALFQSAEAGIFVLI) form a helical membrane-spanning segment. Residues 382 to 437 (YKMYGSEMLHKRDPLDEDEDTDISYKKLKEEEMADTSYGTVKAENIIMMETAQTSL) are Cytoplasmic-facing.

This sequence belongs to the bile acid:sodium symporter (BASS) (TC 2.A.28) family. In terms of processing, activated following N-terminal proteolytic cleavage by thrombin and/or proteases. Highly expressed in brain and small intestine, and moderately expressed in colon, heart, prostate, and testis. Very low levels were detected in kidney, liver, ovary, placenta, spleen, and thymus.

It is found in the cell membrane. Transporter for bile acids. The polypeptide is Sodium/bile acid cotransporter 4 (SLC10A4) (Homo sapiens (Human)).